A 96-amino-acid chain; its full sequence is Cytochrome c oxidase assembly factor 3 homolog, mitochondrial (96 aa).

The Mitochondrial matrix portion of the chain corresponds to 1-50; that stretch reads MSSQGEPKPEAQFAKRIDPTKEALTKEQLQFIRQVEMAQWKKKTDKLRGR. The helical transmembrane segment at 51-73 threads the bilayer; the sequence is NVATGLAIGAVVLGIYGYTFYSV. The Mitochondrial intermembrane portion of the chain corresponds to 74 to 96; the sequence is SQEKIMDEIDEEAKVRVPKTGAN.

It belongs to the COA3 family. Core component of the MITRAC (mitochondrial translation regulation assembly intermediate of cytochrome c oxidase complex) complex.

It localises to the mitochondrion inner membrane. Core component of the MITRAC (mitochondrial translation regulation assembly intermediate of cytochrome c oxidase complex) complex, that regulates cytochrome c oxidase assembly. MITRAC complexes regulate both translation of mitochondrial encoded components and assembly of nuclear-encoded components imported in mitochondrion. Required for efficient translation of MT-CO1 and mitochondrial respiratory chain complex IV assembly. This Danio rerio (Zebrafish) protein is Cytochrome c oxidase assembly factor 3 homolog, mitochondrial (coa3a).